A 628-amino-acid chain; its full sequence is Probable alpha-L-arabinofuranosidase A (628 aa).

The first 25 residues, 1-25 (MVAFSALSGVSALSLLLCLVQHAHG), serve as a signal peptide directing secretion. N-linked (GlcNAc...) asparagine glycans are attached at residues asparagine 36, asparagine 51, asparagine 74, asparagine 152, asparagine 171, asparagine 260, asparagine 359, and asparagine 493.

Belongs to the glycosyl hydrolase 51 family.

Its subcellular location is the secreted. The catalysed reaction is Hydrolysis of terminal non-reducing alpha-L-arabinofuranoside residues in alpha-L-arabinosides.. Its pathway is glycan metabolism; L-arabinan degradation. Alpha-L-arabinofuranosidase involved in the degradation of arabinoxylan, a major component of plant hemicellulose. Acts only on small linear 1,5-alpha-linked L-arabinofuranosyl oligosaccharides. The polypeptide is Probable alpha-L-arabinofuranosidase A (abfA) (Aspergillus awamori (Black koji mold)).